Here is a 105-residue protein sequence, read N- to C-terminus: Large ribosomal subunit protein uL24 (105 aa).

Belongs to the universal ribosomal protein uL24 family. In terms of assembly, part of the 50S ribosomal subunit.

Functionally, one of two assembly initiator proteins, it binds directly to the 5'-end of the 23S rRNA, where it nucleates assembly of the 50S subunit. One of the proteins that surrounds the polypeptide exit tunnel on the outside of the subunit. This is Large ribosomal subunit protein uL24 from Anaplasma marginale (strain St. Maries).